The primary structure comprises 278 residues: MQIIHTIQELRAWRKNAGTVAFVPTMGNLHEGHLALVREAKKRADNVVVSIFVNRLQFGQGEDFDKYPRTLQQDADKLEAEGVAVVFAPDEKELYPNVEQRYNVEPPNLQNELCGKFRPGHFLGVATVVSKLFNIVAPDVACFGKKDYQQLAVIKGLTEDLNFDVEIVPVDTGRAEDGLALSSRNQYLSAAERDEAPRLYRELKAVAESLAQGSLDYAGLEKRAVQSLTEYGWVVDYVEIRRVDTLEVARAGDKKLVVLAAARLGTTRLIDNLEIKLP.

ATP is bound at residue 26 to 33 (MGNLHEGH). His-33 functions as the Proton donor in the catalytic mechanism. Residue Gln-57 participates in (R)-pantoate binding. Residue Gln-57 coordinates beta-alanine. ATP is bound at residue 144–147 (GKKD). Residue Gln-150 coordinates (R)-pantoate. ATP is bound by residues Gly-173 and 181 to 184 (LSSR).

The protein belongs to the pantothenate synthetase family. Homodimer.

Its subcellular location is the cytoplasm. The enzyme catalyses (R)-pantoate + beta-alanine + ATP = (R)-pantothenate + AMP + diphosphate + H(+). The protein operates within cofactor biosynthesis; (R)-pantothenate biosynthesis; (R)-pantothenate from (R)-pantoate and beta-alanine: step 1/1. Functionally, catalyzes the condensation of pantoate with beta-alanine in an ATP-dependent reaction via a pantoyl-adenylate intermediate. The protein is Pantothenate synthetase of Neisseria meningitidis serogroup A / serotype 4A (strain DSM 15465 / Z2491).